A 339-amino-acid polypeptide reads, in one-letter code: Exonuclease subunit 1 (339 aa).

The protein to phage T5 protein D12 and to yeast RAD52. Consists of two subunits: gp46 and gp47.

Exonuclease that plays a role in viral genome replication, DNA recombination, and host DNA degradation. This chain is Exonuclease subunit 1 (47), found in Escherichia coli (Bacteriophage T4).